We begin with the raw amino-acid sequence, 82 residues long: Penaeidin-3e (82 aa).

An N-terminal signal peptide occupies residues 1–19 (MRLVVCLVFLAPFALVCHG). Gln-20 is subject to Pyrrolidone carboxylic acid. 3 disulfides stabilise this stretch: Cys-51-Cys-66, Cys-55-Cys-73, and Cys-67-Cys-74. The residue at position 81 (Ser-81) is a Serine amide.

This sequence belongs to the penaeidin family.

The protein resides in the cytoplasmic granule. Its function is as follows. Antibacterial and antifungal activity. Presents chitin-binding activity. The chain is Penaeidin-3e from Penaeus vannamei (Whiteleg shrimp).